Here is a 370-residue protein sequence, read N- to C-terminus: NADH-quinone oxidoreductase subunit D 2 (370 aa).

It belongs to the complex I 49 kDa subunit family. As to quaternary structure, NDH-1 is composed of 14 different subunits. Subunits NuoB, C, D, E, F, and G constitute the peripheral sector of the complex.

It is found in the cell inner membrane. The catalysed reaction is a quinone + NADH + 5 H(+)(in) = a quinol + NAD(+) + 4 H(+)(out). Functionally, NDH-1 shuttles electrons from NADH, via FMN and iron-sulfur (Fe-S) centers, to quinones in the respiratory chain. The immediate electron acceptor for the enzyme in this species is believed to be ubiquinone. Couples the redox reaction to proton translocation (for every two electrons transferred, four hydrogen ions are translocated across the cytoplasmic membrane), and thus conserves the redox energy in a proton gradient. The polypeptide is NADH-quinone oxidoreductase subunit D 2 (Solibacter usitatus (strain Ellin6076)).